Here is a 124-residue protein sequence, read N- to C-terminus: Small ribosomal subunit protein uS12 (124 aa).

At Asp89 the chain carries 3-methylthioaspartic acid.

Belongs to the universal ribosomal protein uS12 family. As to quaternary structure, part of the 30S ribosomal subunit. Contacts proteins S8 and S17. May interact with IF1 in the 30S initiation complex.

With S4 and S5 plays an important role in translational accuracy. Functionally, interacts with and stabilizes bases of the 16S rRNA that are involved in tRNA selection in the A site and with the mRNA backbone. Located at the interface of the 30S and 50S subunits, it traverses the body of the 30S subunit contacting proteins on the other side and probably holding the rRNA structure together. The combined cluster of proteins S8, S12 and S17 appears to hold together the shoulder and platform of the 30S subunit. The polypeptide is Small ribosomal subunit protein uS12 (Erwinia tasmaniensis (strain DSM 17950 / CFBP 7177 / CIP 109463 / NCPPB 4357 / Et1/99)).